The following is a 71-amino-acid chain: MRKSFYSWLMTQRNPKSDEPVAILADLAFDDTTFPKHSDDFEVISRYLEDQAIFSFNLGHFDAIWEDYLNH.

The protein belongs to the UPF0346 family.

The chain is UPF0346 protein SUB0487 from Streptococcus uberis (strain ATCC BAA-854 / 0140J).